The chain runs to 942 residues: Netrin receptor UNC5B-b (942 aa).

Residues 1 to 30 form the signal peptide; sequence MYLSRIPGGAALAALLVALLLCCNFPPSIA. At 31 to 380 the chain is on the extracellular side; sequence GIEYSDVLPD…LESTGDVALY (350 aa). Positions 51 to 148 constitute an Ig-like domain; the sequence is PHFLLEPEDA…AGTTKSKRSY (98 aa). Cystine bridges form between Cys72–Cys133, Cys84–Cys131, Cys177–Cys228, Cys261–Cys298, Cys265–Cys302, Cys276–Cys288, Cys317–Cys351, Cys321–Cys356, and Cys329–Cys341. Residues 150-245 form the Ig-like C2-type domain; the sequence is RIAYLRKNFD…KRRSTTATVI (96 aa). Residue Asn225 is glycosylated (N-linked (GlcNAc...) asparagine). TSP type-1 domains lie at 249 to 303 and 305 to 357; these read NGGW…TMCP and DGGW…GLCM. A glycan (N-linked (GlcNAc...) asparagine) is linked at Asn350. The chain crosses the membrane as a helical span at residues 381–401; that stretch reads AGLVVAIFIIIILLMAVGIVV. Residues 402 to 942 lie on the Cytoplasmic side of the membrane; the sequence is YRRNCREFDT…MLVMATDGDC (541 aa). The ZU5 domain occupies 541–684; sequence NSVTGTFGSL…LGTYAFVGES (144 aa). Residues 687–835 are UPA domain; that stretch reads RSAIKRLQLA…LEENVKSFDP (149 aa). Residues 863–940 enclose the Death domain; that stretch reads ICNSLDAPNS…EMMLVMATDG (78 aa).

Belongs to the unc-5 family. In terms of assembly, interacts (via extracellular domain) with flrt3 (via extracellular domain). Interacts with rnd1.

Its subcellular location is the cell membrane. Functionally, plays a role in cell-cell adhesion during embryonic development. Receptor for netrin required for axon guidance. Mediates axon repulsion of neuronal growth cones in the developing nervous system upon ligand binding. The protein is Netrin receptor UNC5B-b of Xenopus laevis (African clawed frog).